The chain runs to 534 residues: Solute carrier family 22 member 15 (534 aa).

A helical transmembrane segment spans residues 22–42 (FLLAVLLQLYSATEAIIITIL). N-linked (GlcNAc...) asparagine glycans are attached at residues asparagine 52, asparagine 58, and asparagine 83. 11 helical membrane passes run 97 to 117 (AAYE…IGVI), 136 to 156 (LALE…PLFL), 161 to 181 (LVGV…NECI), 191 to 211 (SLGS…GYFI), 216 to 236 (LLAL…LCIP), 297 to 317 (TLIM…LTLS), 327 to 347 (LNLA…MYLI), 356 to 376 (GSLA…MLVP), 391 to 411 (TLSL…YIYS), 424 to 444 (MGVC…IPAL), and 450 to 470 (ALPF…SLLL). A glycan (N-linked (GlcNAc...) asparagine) is linked at asparagine 513.

Belongs to the major facilitator (TC 2.A.1) superfamily. Organic cation transporter (TC 2.A.1.19) family.

Its subcellular location is the membrane. Functionally, probably transports organic cations. This chain is Solute carrier family 22 member 15 (slc22a15), found in Xenopus tropicalis (Western clawed frog).